A 414-amino-acid polypeptide reads, in one-letter code: uncharacterized protein (414 aa).

A disordered region spans residues 204-230; the sequence is LVGTPAPGPNGSNSDGDSERASQDVRD. Residues 220 to 230 show a composition bias toward basic and acidic residues; the sequence is DSERASQDVRD.

Belongs to the CdaR family.

This is an uncharacterized protein from Mycobacterium tuberculosis (strain CDC 1551 / Oshkosh).